A 380-amino-acid chain; its full sequence is GATOR1 complex protein NPRL2 (380 aa).

Residues 1-133 (MGSSCRIECI…SKQKLVPIMT (133 aa)) form an interaction with PDPK1 region. Residue R78 coordinates GDP. At R78 the chain carries Asymmetric dimethylarginine. Glycyl lysine isopeptide (Lys-Gly) (interchain with G-Cter in ubiquitin) cross-links involve residues K158 and K357.

Belongs to the NPR2 family. As to quaternary structure, within the GATOR complex, component of the GATOR1 subcomplex, made of DEPDC5, NPRL2 and NPRL3. GATOR1 mediates the strong interaction of the GATOR complex with small GTPases Rag (RagA/RRAGA, RagB/RRAGB, RagC/RRAGC and/or RagD/RRAGD) heterodimers. GATOR1 interacts with GPR155/LYCHOS; interaction takes place in presence of cholesterol and prevents interaction between GATOR1 and KICSTOR. Interacts with PDPK1. In terms of processing, in the presence of abundant amino acids, ubiquitinated at Lys-158 and Lys-357 via 'Lys-6'-linked ubiquitination by the WDR24 component of the GATOR2 complex, thereby inhibiting the GATOR1 complex and promoting mTORC1 activation. Post-translationally, asymmetric dimethylation at Arg-78 by PRMT1 inhibits the GTPase activator activity of the GATOR1 complex and consequently inducing timely mTORC1 activation under methionine-sufficient conditions.

The protein localises to the lysosome membrane. Its function is as follows. Catalytic component of the GATOR1 complex, a multiprotein complex that functions as an inhibitor of the amino acid-sensing branch of the mTORC1 pathway. In response to amino acid depletion, the GATOR1 complex has GTPase activating protein (GAP) activity and strongly increases GTP hydrolysis by RagA/RRAGA (or RagB/RRAGB) within heterodimeric Rag complexes, thereby turning them into their inactive GDP-bound form, releasing mTORC1 from lysosomal surface and inhibiting mTORC1 signaling. In the presence of abundant amino acids, the GATOR1 complex is ubiquitinated and inhibited by GATOR2. Within the GATOR1 complex, NPRL2 constitutes the catalytic subunit that mediates the GTPase activator activity and under methionine-sufficient conditions, the GTPase activator activity is inhibited by PRMT1 through methylation and consequently inducing timely mTORC1 activation. In terms of biological role, suppresses Src-dependent tyrosine phosphorylation and activation of PDPK1 and its downstream signaling. Down-regulates PDPK1 kinase activity by interfering with tyrosine phosphorylation at 'Tyr-9', 'Tyr-373' and 'Tyr-376' residues. May act as a tumor suppressor. Suppresses cell growth and enhances sensitivity to various anticancer drugs. This is GATOR1 complex protein NPRL2 from Mus musculus (Mouse).